Reading from the N-terminus, the 3187-residue chain is Cilia- and flagella-associated protein 47 (3187 aa).

The Calponin-homology (CH) domain occupies 1746–1869 (SDSERILLSW…LCVYMYERLP (124 aa)). The interval 2024–2052 (KLTESRQYPKHDDDMSSSGSDTDQGCSDS) is disordered. Positions 2026–2037 (TESRQYPKHDDD) are enriched in basic and acidic residues.

In terms of assembly, interacts with CFAP65. Highly expressed in spermatzoa (at protein level).

Its subcellular location is the cytoplasm. The protein resides in the cytoskeleton. It localises to the flagellum basal body. Functionally, plays a role in flagellar formation and sperm motility. The sequence is that of Cilia- and flagella-associated protein 47 from Homo sapiens (Human).